Here is a 412-residue protein sequence, read N- to C-terminus: Peptidase T (412 aa).

H84 is a Zn(2+) binding site. D86 is a catalytic residue. Position 146 (D146) interacts with Zn(2+). E179 functions as the Proton acceptor in the catalytic mechanism. Zn(2+) contacts are provided by E180, D202, and H385.

The protein belongs to the peptidase M20B family. Zn(2+) is required as a cofactor.

The protein resides in the cytoplasm. The enzyme catalyses Release of the N-terminal residue from a tripeptide.. In terms of biological role, cleaves the N-terminal amino acid of tripeptides. This is Peptidase T from Haemophilus influenzae (strain 86-028NP).